Consider the following 118-residue polypeptide: Membrane-anchored ubiquitin-fold protein 3 (118 aa).

The Ubiquitin-like domain occupies 7-73 (IDIKFRLYDG…LENNKTVGQC (67 aa)). Cys-113 is lipidated: S-palmitoyl cysteine. Cys-115 is modified (cysteine methyl ester). Residue Cys-115 is the site of S-geranylgeranyl cysteine attachment. Residues 116-118 (TIL) constitute a propeptide, removed in mature form.

In terms of tissue distribution, ubiquitous, but three fold higher expression in senescing leaves.

The protein resides in the cell membrane. In terms of biological role, may serve as docking site to facilitate the association of other proteins to the plasma membrane. The polypeptide is Membrane-anchored ubiquitin-fold protein 3 (MUB3) (Arabidopsis thaliana (Mouse-ear cress)).